An 88-amino-acid chain; its full sequence is UPF0298 protein Bcer98_2635 (88 aa).

Belongs to the UPF0298 family.

Its subcellular location is the cytoplasm. The polypeptide is UPF0298 protein Bcer98_2635 (Bacillus cytotoxicus (strain DSM 22905 / CIP 110041 / 391-98 / NVH 391-98)).